The following is a 500-amino-acid chain: AMP phosphorylase (500 aa).

AMP is bound by residues glycine 166, 192 to 197 (SRAVTS), and threonine 201. The active-site Proton donor is aspartate 254. 2 residues coordinate AMP: serine 262 and lysine 286.

This sequence belongs to the thymidine/pyrimidine-nucleoside phosphorylase family. Type 2 subfamily.

It carries out the reaction AMP + phosphate = alpha-D-ribose 1,5-bisphosphate + adenine. It catalyses the reaction CMP + phosphate = cytosine + alpha-D-ribose 1,5-bisphosphate. The catalysed reaction is UMP + phosphate = alpha-D-ribose 1,5-bisphosphate + uracil. Catalyzes the conversion of AMP and phosphate to adenine and ribose 1,5-bisphosphate (R15P). Exhibits phosphorylase activity toward CMP and UMP in addition to AMP. Functions in an archaeal AMP degradation pathway, together with R15P isomerase and RubisCO. The sequence is that of AMP phosphorylase (deoA) from Natronomonas pharaonis (strain ATCC 35678 / DSM 2160 / CIP 103997 / JCM 8858 / NBRC 14720 / NCIMB 2260 / Gabara) (Halobacterium pharaonis).